A 506-amino-acid polypeptide reads, in one-letter code: Histidine--tRNA ligase, mitochondrial (506 aa).

The transit peptide at 1–33 (MHLLGLLPRRAWASLLSQLLRPPWASCTGAVRC) directs the protein to the mitochondrion. A Phosphoserine modification is found at Ser67. L-histidine-binding positions include 131-133 (DLT), Arg158, Gln174, Asp178, Arg327, and 331-332 (YY). Residue Lys444 is modified to N6-acetyllysine.

This sequence belongs to the class-II aminoacyl-tRNA synthetase family. Homodimer.

The protein localises to the mitochondrion. It carries out the reaction tRNA(His) + L-histidine + ATP = L-histidyl-tRNA(His) + AMP + diphosphate + H(+). Its function is as follows. Mitochondrial aminoacyl-tRNA synthetase that catalyzes the ATP-dependent ligation of histidine to the 3'-end of its cognate tRNA, via the formation of an aminoacyl-adenylate intermediate (His-AMP). The protein is Histidine--tRNA ligase, mitochondrial (HARS2) of Pongo abelii (Sumatran orangutan).